We begin with the raw amino-acid sequence, 310 residues long: Alpha/beta hydrolase domain-containing protein 17A (310 aa).

Residues Ser-190, Asp-255, and His-284 each act as charge relay system in the active site. Ser-307 carries the post-translational modification Phosphoserine.

This sequence belongs to the AB hydrolase superfamily. ABHD17 family. In terms of processing, palmitoylated on cysteine residues located in a cysteine cluster at the N-terminus which promotes membrane localization. Palmitoylation is required for post-synaptic localization and for depalmitoylating activity towards DLG4/PSD95.

It is found in the cell membrane. The protein resides in the endosome membrane. It localises to the cell projection. Its subcellular location is the dendritic spine. The protein localises to the postsynaptic density membrane. It carries out the reaction S-hexadecanoyl-L-cysteinyl-[protein] + H2O = L-cysteinyl-[protein] + hexadecanoate + H(+). Its activity is regulated as follows. Inhibited by palmostatin-B. Functionally, hydrolyzes fatty acids from S-acylated cysteine residues in proteins. Has depalmitoylating activity towards NRAS. Has depalmitoylating activity towards DLG4/PSD95. May have depalmitoylating activity towards MAP6. This chain is Alpha/beta hydrolase domain-containing protein 17A, found in Homo sapiens (Human).